Consider the following 793-residue polypeptide: DNA mismatch repair protein MutS (793 aa).

Glycine 589–serine 596 contacts ATP.

The protein belongs to the DNA mismatch repair MutS family.

Its function is as follows. This protein is involved in the repair of mismatches in DNA. It is possible that it carries out the mismatch recognition step. This protein has a weak ATPase activity. The chain is DNA mismatch repair protein MutS from Thermotoga petrophila (strain ATCC BAA-488 / DSM 13995 / JCM 10881 / RKU-1).